A 194-amino-acid polypeptide reads, in one-letter code: Imidazole glycerol phosphate synthase subunit HisH (194 aa).

Positions R3 to L194 constitute a Glutamine amidotransferase type-1 domain. C74 functions as the Nucleophile in the catalytic mechanism. Residues H176 and E178 contribute to the active site.

Heterodimer of HisH and HisF.

The protein resides in the cytoplasm. The enzyme catalyses 5-[(5-phospho-1-deoxy-D-ribulos-1-ylimino)methylamino]-1-(5-phospho-beta-D-ribosyl)imidazole-4-carboxamide + L-glutamine = D-erythro-1-(imidazol-4-yl)glycerol 3-phosphate + 5-amino-1-(5-phospho-beta-D-ribosyl)imidazole-4-carboxamide + L-glutamate + H(+). It catalyses the reaction L-glutamine + H2O = L-glutamate + NH4(+). Its pathway is amino-acid biosynthesis; L-histidine biosynthesis; L-histidine from 5-phospho-alpha-D-ribose 1-diphosphate: step 5/9. In terms of biological role, IGPS catalyzes the conversion of PRFAR and glutamine to IGP, AICAR and glutamate. The HisH subunit catalyzes the hydrolysis of glutamine to glutamate and ammonia as part of the synthesis of IGP and AICAR. The resulting ammonia molecule is channeled to the active site of HisF. This is Imidazole glycerol phosphate synthase subunit HisH from Pyrococcus furiosus (strain ATCC 43587 / DSM 3638 / JCM 8422 / Vc1).